Here is a 61-residue protein sequence, read N- to C-terminus: uncharacterized protein (61 aa).

This is an uncharacterized protein from Escherichia coli (Bacteriophage T4).